The following is a 508-amino-acid chain: Phenylalanine--tRNA ligase alpha subunit (508 aa).

The residue at position 2 (A2) is an N-acetylalanine. Position 190 is a phosphothreonine (T190). Phosphoserine is present on residues S193 and S301. N6-acetyllysine is present on K311. L-phenylalanine contacts are provided by residues T329, 372 to 374, and Y412; that span reads QIE. E414 provides a ligand contact to Mg(2+). F438 serves as a coordination point for L-phenylalanine.

The protein belongs to the class-II aminoacyl-tRNA synthetase family. Phe-tRNA synthetase alpha subunit type 2 subfamily. Heterotetramer; dimer of two heterodimers formed by FARSA and FARSB. It depends on Mg(2+) as a cofactor.

The protein localises to the cytoplasm. It carries out the reaction tRNA(Phe) + L-phenylalanine + ATP = L-phenylalanyl-tRNA(Phe) + AMP + diphosphate + H(+). In Pongo abelii (Sumatran orangutan), this protein is Phenylalanine--tRNA ligase alpha subunit (FARSA).